The primary structure comprises 414 residues: L-cysteine:1D-myo-inositol 2-amino-2-deoxy-alpha-D-glucopyranoside ligase (414 aa).

Residue C44 participates in Zn(2+) binding. Residues 44–47, T59, and 82–84 each bind L-cysteinyl-5'-AMP; these read CGIT and NIT. The short motif at 46–56 is the 'HIGH' region element; sequence ITPYDSTHLGH. The 'ERGGDP' region motif lies at 188-193; sequence ERGGDP. W228 is a binding site for L-cysteinyl-5'-AMP. C232 lines the Zn(2+) pocket. 250–252 lines the L-cysteinyl-5'-AMP pocket; that stretch reads GSD. H257 contacts Zn(2+). I284 is a binding site for L-cysteinyl-5'-AMP. Residues 290–294 carry the 'KMSKS' region motif; it reads KMSKS.

This sequence belongs to the class-I aminoacyl-tRNA synthetase family. MshC subfamily. As to quaternary structure, monomer. Zn(2+) is required as a cofactor.

The catalysed reaction is 1D-myo-inositol 2-amino-2-deoxy-alpha-D-glucopyranoside + L-cysteine + ATP = 1D-myo-inositol 2-(L-cysteinylamino)-2-deoxy-alpha-D-glucopyranoside + AMP + diphosphate + H(+). In terms of biological role, catalyzes the ATP-dependent condensation of GlcN-Ins and L-cysteine to form L-Cys-GlcN-Ins. This chain is L-cysteine:1D-myo-inositol 2-amino-2-deoxy-alpha-D-glucopyranoside ligase (mshC), found in Corynebacterium diphtheriae (strain ATCC 700971 / NCTC 13129 / Biotype gravis).